Here is a 323-residue protein sequence, read N- to C-terminus: Lipid A biosynthesis acyltransferase 1 (323 aa).

Residues 23–43 (YWGAWLGVAAMAGIALTPPKF) traverse the membrane as a helical segment. The short motif at 139–144 (HGWAVD) is the HXXXXD motif element.

Belongs to the LpxL/LpxM/LpxP family. LpxM subfamily.

It localises to the cell inner membrane. It carries out the reaction an alpha-Kdo-(2-&gt;4)-alpha-Kdo-(2-&gt;6)-(acyl)-lipid IVA + a fatty acyl-[ACP] = an alpha-Kdo-(2-&gt;4)-alpha-Kdo-(2-&gt;6)-lipid A + holo-[ACP]. Its pathway is glycolipid biosynthesis; KDO(2)-lipid A biosynthesis; KDO(2)-lipid A from CMP-3-deoxy-D-manno-octulosonate and lipid IV(A): step 4/4. It participates in bacterial outer membrane biogenesis; lipopolysaccharide biosynthesis. Functionally, catalyzes the transfer of an acyl chain from an acyl-[acyl-carrier-protein] (ACP) to a Kdo(2)-(acyl)-lipid IV(A) to form a Kdo(2)-lipid A. In Shigella flexneri, this protein is Lipid A biosynthesis acyltransferase 1.